A 195-amino-acid polypeptide reads, in one-letter code: MEASNVALVLPAPSLLTPSSTPSPSGEGMGTESMLLLFDDIWMKLMELAKKLRDIMRSYNVEKQRLAWELQVNVLQTQMKTIDEAFRASMITAGGAMLSGVLTIGLGAVGGETGLIAGQAVGHTAGGVMGLGAGVAQRQSDQDKAIADLQQNGAQSYNKSLTEIMEKATEIMQQIIGVGSSLVTVLAEILRALTR.

Residues 44 to 80 (KLMELAKKLRDIMRSYNVEKQRLAWELQVNVLQTQMK) are a coiled coil. 3 consecutive transmembrane segments (helical) span residues 90 to 110 (MITA…GAVG), 115 to 135 (LIAG…GAGV), and 170 to 190 (EIMQ…AEIL).

The protein belongs to the SctB/EspB family. In terms of assembly, the core secretion machinery of the T3SS is composed of approximately 20 different proteins, including cytoplasmic components, a base, an export apparatus and a needle. This subunit is involved in the formation of a pore, called the translocon, in host membrane. May form a complex with SseB and SseC/SctE2. SseB is required for correct localization of SseD/SctB2 on the bacterial cell surface. Binds to the chaperone SseA.

Its subcellular location is the secreted. The protein resides in the cell surface. The protein localises to the host membrane. Component of the type III secretion system 2 (SPI-2 T3SS), also called injectisome, which is used to inject bacterial effector proteins into eukaryotic host cells. SseC/SctE2 and SseD/SctB2 are inserted into the host membrane where they form a pore and allow the translocation of effector proteins into the cytosol of target cells. In terms of biological role, required for the translocation of SPI-2 effector proteins. Required for systemic Salmonella infection of the mouse. Essential for SpvB-induced actin depolymerization in the host cell cytoplasm. This chain is SPI-2 type 3 secretion system translocon protein SctB, found in Salmonella typhimurium (strain LT2 / SGSC1412 / ATCC 700720).